The chain runs to 88 residues: Large ribosomal subunit protein eL34 (88 aa).

It belongs to the eukaryotic ribosomal protein eL34 family.

This chain is Large ribosomal subunit protein eL34, found in Saccharolobus solfataricus (strain ATCC 35092 / DSM 1617 / JCM 11322 / P2) (Sulfolobus solfataricus).